The chain runs to 261 residues: Protein unc-50 homolog (261 aa).

The next 6 helical transmembrane spans lie at 37–57, 82–102, 113–133, 166–186, 190–210, and 225–245; these read IFHYPQMDIEYTFWIMFYLCF, AFAVILVFFMAIASMSYAITF, VMFWAVFVDFITVGLLIATIG, SFFPLFIILYVVQFFLLPILL, LFAAILSNTLYIIGFSYYYYV, and VVFLYPIGILFALYIVSVVMG.

Belongs to the unc-50 family.

It localises to the membrane. The chain is Protein unc-50 homolog from Dictyostelium discoideum (Social amoeba).